A 245-amino-acid polypeptide reads, in one-letter code: 1-(5-phosphoribosyl)-5-[(5-phosphoribosylamino)methylideneamino] imidazole-4-carboxamide isomerase (245 aa).

D11 functions as the Proton acceptor in the catalytic mechanism. D132 serves as the catalytic Proton donor.

The protein belongs to the HisA/HisF family.

The protein resides in the cytoplasm. It catalyses the reaction 1-(5-phospho-beta-D-ribosyl)-5-[(5-phospho-beta-D-ribosylamino)methylideneamino]imidazole-4-carboxamide = 5-[(5-phospho-1-deoxy-D-ribulos-1-ylimino)methylamino]-1-(5-phospho-beta-D-ribosyl)imidazole-4-carboxamide. It functions in the pathway amino-acid biosynthesis; L-histidine biosynthesis; L-histidine from 5-phospho-alpha-D-ribose 1-diphosphate: step 4/9. This chain is 1-(5-phosphoribosyl)-5-[(5-phosphoribosylamino)methylideneamino] imidazole-4-carboxamide isomerase, found in Geobacillus kaustophilus (strain HTA426).